A 343-amino-acid chain; its full sequence is Probable xyloglucan endotransglucosylase/hydrolase protein 30 (343 aa).

A signal peptide spans Met-1–Ala-23. Residues Phe-24 to Phe-224 enclose the GH16 domain. Glu-109 serves as the catalytic Nucleophile. Glu-113 functions as the Proton donor in the catalytic mechanism. Residues Glu-113 and Gln-126–Asn-128 contribute to the xyloglucan site. Asn-132 carries an N-linked (GlcNAc...) asparagine glycan. Xyloglucan is bound by residues His-136–Glu-140, Asp-203–Trp-204, Gly-208, and Arg-285. Cys-280 and Cys-293 form a disulfide bridge. The disordered stretch occupies residues Thr-306–Leu-343.

The protein belongs to the glycosyl hydrolase 16 family. XTH group 3 subfamily. Contains at least one intrachain disulfide bond essential for its enzymatic activity. Predominantly expressed in green siliques.

It localises to the secreted. It is found in the cell wall. The protein localises to the extracellular space. Its subcellular location is the apoplast. It carries out the reaction breaks a beta-(1-&gt;4) bond in the backbone of a xyloglucan and transfers the xyloglucanyl segment on to O-4 of the non-reducing terminal glucose residue of an acceptor, which can be a xyloglucan or an oligosaccharide of xyloglucan.. Catalyzes xyloglucan endohydrolysis (XEH) and/or endotransglycosylation (XET). Cleaves and religates xyloglucan polymers, an essential constituent of the primary cell wall, and thereby participates in cell wall construction of growing tissues. The chain is Probable xyloglucan endotransglucosylase/hydrolase protein 30 (XTH30) from Arabidopsis thaliana (Mouse-ear cress).